Here is a 414-residue protein sequence, read N- to C-terminus: uncharacterized protein (414 aa).

The Lumenal portion of the chain corresponds to Met1–Lys66. The disordered stretch occupies residues Ser20–Asp51. Residues Asp25–Asp51 show a composition bias toward polar residues. Lys40 is covalently cross-linked (Glycyl lysine isopeptide (Lys-Gly) (interchain with G-Cter in ubiquitin)). The helical transmembrane segment at Pro67–Ser87 threads the bilayer. Positions Tyr78–Arg215 constitute an EamA 1 domain. The Cytoplasmic segment spans residues Thr88–Pro106. The chain crosses the membrane as a helical span at residues Leu107–Ile127. Topologically, residues Asn128 to Lys144 are lumenal. A helical transmembrane segment spans residues Trp145–Leu167. Residues Thr168 to Asp171 lie on the Cytoplasmic side of the membrane. The helical transmembrane segment at Ala172–Leu191 threads the bilayer. The Lumenal portion of the chain corresponds to Arg192–Glu199. Residues Ala200–Phe220 traverse the membrane as a helical segment. The Cytoplasmic segment spans residues Gly221–Arg241. Residues Leu242 to Ile262 traverse the membrane as a helical segment. The region spanning Leu253–Arg379 is the EamA 2 domain. The Lumenal segment spans residues Arg263–Ala269. A helical transmembrane segment spans residues His270–Ile290. Residues Asn291–Trp307 lie on the Cytoplasmic side of the membrane. The chain crosses the membrane as a helical span at residues Ile308–Ile328. Over Gln329 to His357 the chain is Lumenal. Residues Trp358–Ile378 traverse the membrane as a helical segment. Over Arg379–Lys414 the chain is Cytoplasmic.

It to yeast YPL264c.

The protein localises to the membrane. This is an uncharacterized protein from Saccharomyces cerevisiae (strain ATCC 204508 / S288c) (Baker's yeast).